A 202-amino-acid polypeptide reads, in one-letter code: MATLIYVDKEIGEPGTRVAAKDVLKLESRPSIKALDGISQVLTRRFGKTYDAPSALPKATRKALGTVNRATEKSVKTNGPRKQKQPSFSAKKMTEKTVKTKSSVPASDDAYPEIEKFFPFNLLDFESFDLPEERQIAHLPLSGVPLMILDEEGELEKLFQLGPPSPVKMPSPPWECNLLQSPSSILSTLDVELPAVCYDIDI.

The interval Thr60–Pro105 is disordered. The D-box motif lies at Arg61 to Leu64. The SH3-binding signature appears at Pro163 to Pro173.

The protein belongs to the securin family. In terms of tissue distribution, expressed at low levels in the pituitary, liver, spleen, prostate, testis, ovary, small intestine and colon. Also expressed in various pituitary, testicular, liver and ovarian tumors.

The protein localises to the cytoplasm. It is found in the nucleus. This is Securin-2 (PTTG2) from Homo sapiens (Human).